The chain runs to 298 residues: NAD kinase (298 aa).

Residue D80 is the Proton acceptor of the active site. NAD(+) is bound by residues 80 to 81, 154 to 155, R182, D184, 195 to 200, A219, and Q253; these read DG, ND, and TAYALS.

This sequence belongs to the NAD kinase family. The cofactor is a divalent metal cation.

It localises to the cytoplasm. It catalyses the reaction NAD(+) + ATP = ADP + NADP(+) + H(+). In terms of biological role, involved in the regulation of the intracellular balance of NAD and NADP, and is a key enzyme in the biosynthesis of NADP. Catalyzes specifically the phosphorylation on 2'-hydroxyl of the adenosine moiety of NAD to yield NADP. This is NAD kinase from Delftia acidovorans (strain DSM 14801 / SPH-1).